Reading from the N-terminus, the 243-residue chain is Benzil reductase ((S)-benzoin forming) (243 aa).

NADP(+) is bound by residues Ile-6, Asn-80, Tyr-147, Lys-151, and Thr-184. Tyr-147 (proton acceptor) is an active-site residue.

This sequence belongs to the short-chain dehydrogenases/reductases (SDR) family.

The protein localises to the cytoplasm. It catalyses the reaction (S)-benzoin + NADP(+) = benzil + NADPH + H(+). Reduces benzil stereospecifically to (S)-benzoin. This Bacillus subtilis (strain 168) protein is Benzil reductase ((S)-benzoin forming) (yueD).